The primary structure comprises 156 residues: Ribosomal RNA large subunit methyltransferase H (156 aa).

Residues Leu73, Gly104, and 123–128 (LSALTL) each bind S-adenosyl-L-methionine.

This sequence belongs to the RNA methyltransferase RlmH family. Homodimer.

It is found in the cytoplasm. The enzyme catalyses pseudouridine(1915) in 23S rRNA + S-adenosyl-L-methionine = N(3)-methylpseudouridine(1915) in 23S rRNA + S-adenosyl-L-homocysteine + H(+). Its function is as follows. Specifically methylates the pseudouridine at position 1915 (m3Psi1915) in 23S rRNA. This chain is Ribosomal RNA large subunit methyltransferase H, found in Shewanella denitrificans (strain OS217 / ATCC BAA-1090 / DSM 15013).